The following is a 484-amino-acid chain: Polyamine oxidase 3 (484 aa).

Residues glutamate 47, arginine 55, valine 236, and glutamate 423 each coordinate FAD. The Microbody targeting signal motif lies at 482-484 (SRL).

The protein belongs to the flavin monoamine oxidase family. It depends on FAD as a cofactor. In terms of tissue distribution, widely expressed.

Its subcellular location is the peroxisome. The enzyme catalyses spermine + O2 + H2O = 3-aminopropanal + spermidine + H2O2. The catalysed reaction is N(1)-acetylspermine + O2 + H2O = 3-acetamidopropanal + spermidine + H2O2. It carries out the reaction norspermine + O2 + H2O = norspermidine + 3-aminopropanal + H2O2. It catalyses the reaction spermidine + O2 + H2O = 3-aminopropanal + putrescine + H2O2. The enzyme catalyses thermospermine + O2 + H2O = 3-aminopropanal + spermidine + H2O2. It functions in the pathway amine and polyamine degradation; spermine degradation. Its pathway is amine and polyamine degradation; spermidine degradation. In terms of biological role, flavoenzyme involved in polyamine back-conversion. Catalyzes the oxidation of the secondary amino group of polyamines, such as spermine, spermidine and their acetyl derivatives. Substrate preference is spermidine &gt; norspermine &gt; thermospermine &gt; N(1)-acetylspermine &gt; spermine. No activity detected when putrescine is used as substrate. Plays an important role in the regulation of polyamine intracellular concentration. The chain is Polyamine oxidase 3 from Oryza sativa subsp. japonica (Rice).